The primary structure comprises 77 residues: U8-lycotoxin-Ls1n (77 aa).

A signal peptide spans 1 to 20 (MKLMIFTGLVLFAIVSLIEA). Residues 21 to 26 (QAENEK) constitute a propeptide that is removed on maturation.

This sequence belongs to the neurotoxin 19 (CSTX) family. 08 (U8-Lctx) subfamily. In terms of processing, contains 4 disulfide bonds. In terms of tissue distribution, expressed by the venom gland.

The protein resides in the secreted. The sequence is that of U8-lycotoxin-Ls1n from Lycosa singoriensis (Wolf spider).